The primary structure comprises 207 residues: Small ribosomal subunit protein uS4 (207 aa).

Residues lysine 31 to glutamine 55 form a disordered region. Positions glycine 42–glycine 53 are enriched in polar residues. The S4 RNA-binding domain occupies serine 97–leucine 160.

This sequence belongs to the universal ribosomal protein uS4 family. As to quaternary structure, part of the 30S ribosomal subunit. Contacts protein S5. The interaction surface between S4 and S5 is involved in control of translational fidelity.

In terms of biological role, one of the primary rRNA binding proteins, it binds directly to 16S rRNA where it nucleates assembly of the body of the 30S subunit. Functionally, with S5 and S12 plays an important role in translational accuracy. This Paraburkholderia phymatum (strain DSM 17167 / CIP 108236 / LMG 21445 / STM815) (Burkholderia phymatum) protein is Small ribosomal subunit protein uS4.